The chain runs to 448 residues: tRNA(Ile)-lysidine synthase (448 aa).

Residue 25–30 participates in ATP binding; the sequence is SGGSDS.

It belongs to the tRNA(Ile)-lysidine synthase family.

Its subcellular location is the cytoplasm. The catalysed reaction is cytidine(34) in tRNA(Ile2) + L-lysine + ATP = lysidine(34) in tRNA(Ile2) + AMP + diphosphate + H(+). Ligates lysine onto the cytidine present at position 34 of the AUA codon-specific tRNA(Ile) that contains the anticodon CAU, in an ATP-dependent manner. Cytidine is converted to lysidine, thus changing the amino acid specificity of the tRNA from methionine to isoleucine. In Brucella melitensis biotype 2 (strain ATCC 23457), this protein is tRNA(Ile)-lysidine synthase.